Here is a 43-residue protein sequence, read N- to C-terminus: uncharacterized protein (43 aa).

Residues 1-43 form a disordered region; the sequence is MFKSRIETGGFQFQVHGDDESAMDDEFIDDDDDQQVVEPVTDN. Positions 20–35 are enriched in acidic residues; the sequence is ESAMDDEFIDDDDDQQ.

This is an uncharacterized protein from Dictyostelium discoideum (Social amoeba).